Here is a 503-residue protein sequence, read N- to C-terminus: MEAAAAAPRRPQLLIVLVAAATLLPGAKALQCFCHLCTKDNFTCETDGLCFVSVTETTDKVIHNSMCIAEIDLIPRDRPFVCAPSSKTGAVTTTYCCNQDHCNKIELPTTGPFSEKQSAGLGPVELAAVIAGPVCFVCIALMLMVYICHNRTVIHHRVPNEEDPSLDRPFISEGTTLKDLIYDMTTSGSGSGLPLLVQRTIARTIVLQESIGKGRFGEVWRGKWRGEEVAVKIFSSREERSWFREAEIYQTVMLRHENILGFIAADNKDNGTWTQLWLVSDYHEHGSLFDYLNRYTVTVEGMIKLALSTASGLAHLHMEIVGTQGKPAIAHRDLKSKNILVKKNGTCCIADLGLAVRHDSATDTIDIAPNHRVGTKRYMAPEVLDDSINMKHFESFKRADIYAMGLVFWEIARRCSIGGIHEDYQLPYYDLVPSDPSVEEMRKVVCEQKLRPNIPNRWQSCEALRVMAKIMRECWYANGAARLTALRIKKTLSQLSQQEGIKM.

An N-terminal signal peptide occupies residues 1 to 29 (MEAAAAAPRRPQLLIVLVAAATLLPGAKA). Over 30 to 126 (LQCFCHLCTK…QSAGLGPVEL (97 aa)) the chain is Extracellular. 5 disulfide bridges follow: Cys-32–Cys-50, Cys-34–Cys-37, Cys-44–Cys-67, Cys-82–Cys-96, and Cys-97–Cys-102. Asn-41 carries an N-linked (GlcNAc...) asparagine glycan. Residues 127–147 (AAVIAGPVCFVCIALMLMVYI) form a helical membrane-spanning segment. The Cytoplasmic segment spans residues 148–503 (CHNRTVIHHR…QLSQQEGIKM (356 aa)). Ser-165 is subject to Phosphoserine. Residues 175 to 204 (TTLKDLIYDMTTSGSGSGLPLLVQRTIART) form the GS domain. Phosphothreonine; by TGFBR2 is present on residues Thr-185 and Thr-186. Ser-187, Ser-189, and Ser-191 each carry phosphoserine; by TGFBR2. The FKBP1A-binding motif lies at 193–194 (LP). Residues 205-495 (IVLQESIGKG…LRIKKTLSQL (291 aa)) enclose the Protein kinase domain. ATP contacts are provided by residues 211–219 (IGKGRFGEV) and Lys-232. A Glycyl lysine isopeptide (Lys-Gly) (interchain with G-Cter in ubiquitin) cross-link involves residue Lys-268. Asp-333 functions as the Proton acceptor in the catalytic mechanism. Lys-391 is covalently cross-linked (Glycyl lysine isopeptide (Lys-Gly) (interchain with G-Cter in SUMO)).

This sequence belongs to the protein kinase superfamily. TKL Ser/Thr protein kinase family. TGFB receptor subfamily. Homodimer; in the endoplasmic reticulum but also at the cell membrane. Heterohexamer; TGFB1, TGFB2 and TGFB3 homodimeric ligands assemble a functional receptor composed of two TGFBR1 and TGFBR2 heterodimers to form a ligand-receptor heterohexamer. The respective affinity of TGBRB1 and TGFBR2 for the ligands may modulate the kinetics of assembly of the receptor and may explain the different biological activities of TGFB1, TGFB2 and TGFB3. Component of a complex composed of TSC22D1 (via N-terminus), TGFBR1 and TGFBR2; the interaction between TSC22D1 and TGFBR1 is inhibited by SMAD7 and promoted by TGFB1. Interacts with CD109; inhibits TGF-beta receptor activation in keratinocytes. Interacts with RBPMS. Interacts (unphosphorylated) with FKBP1A; prevents TGFBR1 phosphorylation by TGFBR2 and stabilizes it in the inactive conformation. Interacts with SMAD2, SMAD3 and ZFYVE9; ZFYVE9 recruits SMAD2 and SMAD3 to the TGF-beta receptor. Interacts with TRAF6 and MAP3K7; induces MAP3K7 activation by TRAF6. Interacts with PARD6A; involved in TGF-beta induced epithelial to mesenchymal transition. Interacts with NEDD4L. Interacts with SMAD7, SMURF1 and SMURF2; SMAD7 recruits NEDD4L, SMURF1 and SMURF2 to the TGF-beta receptor. Interacts with USP15 and VPS39. Interacts with SDCBP (via C-terminus). Interacts with CAV1 and this interaction is impaired in the presence of SDCBP. Interacts with APPL1; interaction is TGF beta dependent; mediates trafficking of the TGFBR1 from the endosomes to the nucleus via microtubules in a TRAF6-dependent manner. Interacts with GPR50; this interaction promotes the constitutive activation of SMAD signaling pathway. Requires Mg(2+) as cofactor. It depends on Mn(2+) as a cofactor. Phosphorylated at basal levels in the absence of ligand. Activated upon phosphorylation by TGFBR2, mainly in the GS domain. Phosphorylation in the GS domain abrogates FKBP1A-binding. In terms of processing, N-Glycosylated. Post-translationally, ubiquitinated; undergoes ubiquitination catalyzed by several E3 ubiquitin ligases including SMURF1, SMURF2 and NEDD4L2. Results in the proteasomal and/or lysosomal degradation of the receptor thereby negatively regulating its activity. Deubiquitinated by USP15, leading to stabilization of the protein and enhanced TGF-beta signal. Its ubiquitination and proteasome-mediated degradation is negatively regulated by SDCBP. Ubiquitinated by BFAR via'Lys-63'-linked ubiquitination at Lys-268, leading to TGF-beta signaling activation.

It localises to the cell membrane. The protein localises to the cell junction. The protein resides in the tight junction. It is found in the membrane raft. Its subcellular location is the cell surface. It carries out the reaction L-threonyl-[receptor-protein] + ATP = O-phospho-L-threonyl-[receptor-protein] + ADP + H(+). It catalyses the reaction L-seryl-[receptor-protein] + ATP = O-phospho-L-seryl-[receptor-protein] + ADP + H(+). With respect to regulation, kept in an inactive conformation by FKBP1A preventing receptor activation in absence of ligand. CD109 is another inhibitor of the receptor. Transmembrane serine/threonine kinase forming with the TGF-beta type II serine/threonine kinase receptor, TGFBR2, the non-promiscuous receptor for the TGF-beta cytokines TGFB1, TGFB2 and TGFB3. Transduces the TGFB1, TGFB2 and TGFB3 signal from the cell surface to the cytoplasm and is thus regulating a plethora of physiological and pathological processes including cell cycle arrest in epithelial and hematopoietic cells, control of mesenchymal cell proliferation and differentiation, wound healing, extracellular matrix production, immunosuppression and carcinogenesis. The formation of the receptor complex composed of 2 TGFBR1 and 2 TGFBR2 molecules symmetrically bound to the cytokine dimer results in the phosphorylation and the activation of TGFBR1 by the constitutively active TGFBR2. Activated TGFBR1 phosphorylates SMAD2 which dissociates from the receptor and interacts with SMAD4. The SMAD2-SMAD4 complex is subsequently translocated to the nucleus where it modulates the transcription of the TGF-beta-regulated genes. This constitutes the canonical SMAD-dependent TGF-beta signaling cascade. Also involved in non-canonical, SMAD-independent TGF-beta signaling pathways. For instance, TGFBR1 induces TRAF6 autoubiquitination which in turn results in MAP3K7 ubiquitination and activation to trigger apoptosis. Also regulates epithelial to mesenchymal transition through a SMAD-independent signaling pathway through PARD6A phosphorylation and activation. The polypeptide is TGF-beta receptor type-1 (Tgfbr1) (Mus musculus (Mouse)).